The sequence spans 98 residues: Citrate lyase acyl carrier protein 1 (98 aa).

An O-(phosphoribosyl dephospho-coenzyme A)serine modification is found at Ser14.

This sequence belongs to the CitD family. As to quaternary structure, oligomer with a subunit composition of (alpha,beta,gamma)6.

The protein localises to the cytoplasm. Covalent carrier of the coenzyme of citrate lyase. This is Citrate lyase acyl carrier protein 1 from Salmonella paratyphi A (strain ATCC 9150 / SARB42).